We begin with the raw amino-acid sequence, 257 residues long: Snake venom serine protease KN2 (257 aa).

The first 18 residues, 1 to 18, serve as a signal peptide directing secretion; it reads MVLIRVLANLLILQLSYA. Positions 19 to 24 are excised as a propeptide; that stretch reads QKSSEL. Residues 25-248 enclose the Peptidase S1 domain; it reads VIGGHPCNIN…HLDWIKSIIA (224 aa). 6 disulfide bridges follow: Cys31/Cys162, Cys49/Cys65, Cys97/Cys255, Cys141/Cys209, Cys173/Cys188, and Cys199/Cys224. Catalysis depends on charge relay system residues His64 and Asp109. N-linked (GlcNAc...) asparagine glycosylation is found at Asn120 and Asn121. Catalysis depends on Ser203, which acts as the Charge relay system.

It belongs to the peptidase S1 family. Snake venom subfamily. In terms of assembly, monomer. As to expression, expressed by the venom gland.

Its subcellular location is the secreted. In terms of biological role, snake venom serine protease that may act in the hemostasis system of the prey. This chain is Snake venom serine protease KN2, found in Trimeresurus stejnegeri (Chinese green tree viper).